Reading from the N-terminus, the 212-residue chain is Ropporin-1 (212 aa).

An RIIa domain is found at 12–49; sequence PELPKMLKEFAKAAIRAQPQDLIQWGADYFEALSRGET. S56 is modified (phosphoserine). The interaction with RHPN1 stretch occupies residues 209 to 212; sequence VWLE.

This sequence belongs to the ropporin family. As to quaternary structure, homodimer. Interacts with AKAP3. May interact with SPA17. Interacts with RHPN1. Interacts with FSCB; the interaction increases upon spermatozoa capacitation conditions. Interacts with CFAP61. Sumoylated, sumoylation decreases upon spermatozoa capacitation conditions.

Its subcellular location is the cell projection. The protein resides in the cilium. It localises to the flagellum. Its function is as follows. Important for male fertility. With ROPN1L, involved in fibrous sheath integrity and sperm motility, plays a role in PKA-dependent signaling processes required for spermatozoa capacitation. The sequence is that of Ropporin-1 (ROPN1) from Macaca fascicularis (Crab-eating macaque).